A 441-amino-acid chain; its full sequence is 3-phosphoshikimate 1-carboxyvinyltransferase (441 aa).

3 residues coordinate 3-phosphoshikimate: K25, S26, and R30. K25 contacts phosphoenolpyruvate. The phosphoenolpyruvate site is built by G97 and R125. 3-phosphoshikimate-binding residues include S169, Q170, D311, and K338. Q170 provides a ligand contact to phosphoenolpyruvate. D311 acts as the Proton acceptor in catalysis. 3 residues coordinate phosphoenolpyruvate: R342, R383, and K410.

Belongs to the EPSP synthase family. As to quaternary structure, monomer.

The protein localises to the cytoplasm. The enzyme catalyses 3-phosphoshikimate + phosphoenolpyruvate = 5-O-(1-carboxyvinyl)-3-phosphoshikimate + phosphate. It participates in metabolic intermediate biosynthesis; chorismate biosynthesis; chorismate from D-erythrose 4-phosphate and phosphoenolpyruvate: step 6/7. Functionally, catalyzes the transfer of the enolpyruvyl moiety of phosphoenolpyruvate (PEP) to the 5-hydroxyl of shikimate-3-phosphate (S3P) to produce enolpyruvyl shikimate-3-phosphate and inorganic phosphate. The protein is 3-phosphoshikimate 1-carboxyvinyltransferase of Chlamydia muridarum (strain MoPn / Nigg).